The primary structure comprises 893 residues: Flippase kinase 1 (893 aa).

Over residues 1–23 (MAGHHHEHEQERDHEQEHEHDSL) the composition is skewed to basic and acidic residues. Disordered regions lie at residues 1 to 124 (MAGH…SSKL), 129 to 148 (PMTS…PTIP), and 163 to 243 (QHEH…ERAG). Polar residues predominate over residues 24-42 (QRPTTGSERTRSISFSKLL). Over residues 49–62 (NASSSNNMSVSSVN) the composition is skewed to low complexity. Over residues 76–87 (NNSGSEGQSSRF) the composition is skewed to polar residues. Over residues 96–122 (SGNSSKNASAHNSSQSSLEGDSASSSS) the composition is skewed to low complexity. Phosphoserine occurs at positions 140, 144, 171, 175, and 185. Over residues 206–216 (SQNSNNSSSTS) the composition is skewed to low complexity. Positions 228–237 (GSQGFSSNNP) are enriched in polar residues. Ser300 is modified (phosphoserine). Residues 334 to 355 (DTLNGSPSRGSSKSPTITQTFP) are compositionally biased toward polar residues. Residues 334–480 (DTLNGSPSRG…PRRSRRLRTK (147 aa)) form a disordered region. Over residues 370–380 (NNDKHDEKEEQ) the composition is skewed to basic and acidic residues. Over residues 381 to 399 (QTTTDNKTRNLSPTKQNGK) the composition is skewed to polar residues. Phosphoserine is present on Ser414. Positions 422 to 439 (ASATSPTSSSARKTSGSS) are enriched in low complexity. Phosphoserine is present on Ser462. The 282-residue stretch at 496 to 777 (FEKIRLLGQG…AADVKKHPFF (282 aa)) folds into the Protein kinase domain. Residues 502–510 (LGQGDVGKV) and Lys525 contribute to the ATP site. The active-site Proton acceptor is the Asp621. One can recognise an AGC-kinase C-terminal domain in the interval 778–861 (KKVQWSLLRN…MSLMEQDNNS (84 aa)). A disordered region spans residues 874 to 893 (AYTPNSNRSRSNSHRTFFKR). Basic residues predominate over residues 884–893 (SNSHRTFFKR).

Belongs to the protein kinase superfamily. Ser/Thr protein kinase family. KIN82 subfamily. In terms of processing, the N-terminal non-catalytic domain is phosphorylated by YPK1.

It localises to the cytoplasm. The protein localises to the cell membrane. It catalyses the reaction L-seryl-[protein] + ATP = O-phospho-L-seryl-[protein] + ADP + H(+). The enzyme catalyses L-threonyl-[protein] + ATP = O-phospho-L-threonyl-[protein] + ADP + H(+). Down-regulated by YKP1 phosphorylation. This effect is counteracted in the presence of mannosyl-inositolphosphorylceramide (MIPC). Flippase activator that phosphorylates DNF1 and DNF2 and which is involved in the generation of phospholipid asymmetry in membranes by the inward translocation of phospholipids and in the retrieval pathway from early endosomes to the trans-Golgi network (TGN). Also phosphorylates the N-terminal half of YPK1. Involved in pheromone-response. The protein is Flippase kinase 1 (FPK1) of Saccharomyces cerevisiae (strain ATCC 204508 / S288c) (Baker's yeast).